We begin with the raw amino-acid sequence, 291 residues long: 4-hydroxy-tetrahydrodipicolinate synthase (291 aa).

Position 47 (T47) interacts with pyruvate. The Proton donor/acceptor role is filled by Y134. The active-site Schiff-base intermediate with substrate is K162. A pyruvate-binding site is contributed by I205.

It belongs to the DapA family. In terms of assembly, homotetramer; dimer of dimers.

It is found in the cytoplasm. It catalyses the reaction L-aspartate 4-semialdehyde + pyruvate = (2S,4S)-4-hydroxy-2,3,4,5-tetrahydrodipicolinate + H2O + H(+). It functions in the pathway amino-acid biosynthesis; L-lysine biosynthesis via DAP pathway; (S)-tetrahydrodipicolinate from L-aspartate: step 3/4. Functionally, catalyzes the condensation of (S)-aspartate-beta-semialdehyde [(S)-ASA] and pyruvate to 4-hydroxy-tetrahydrodipicolinate (HTPA). This is 4-hydroxy-tetrahydrodipicolinate synthase from Methanoculleus marisnigri (strain ATCC 35101 / DSM 1498 / JR1).